The primary structure comprises 476 residues: MPMKIENGPFWKRVRENLDNDFMRGAVAGMQDRGYVRRLGVIEELGHWEEWRSLAEQIRKHTLENLDFYLMQLSENVAKRGGHVFFAQTAEEANEYIRRVALEKQAKKIVKSKSMVTEEINLNPVLEAIGCQVVETDLGEYILQIDDHDPPSHIVGPALHKNKEQIRDVFQRKLGYTKSSDPVELARHAREMLRRDYLTADIGITGCNFAIAESGSITLVTNEGNADLVTALPKTQITVMGMERIVPTFEEMEVLVSMLTRSAVGQKLTSYITVLTGPRDEGDVDGPEEFHLVIVDNGRSSILGTEFQPVLQCIRCAACVNVCPVYRHIGGHSYGSIYSGPIGAVLSPLLGGYDDYKELPYASSLCAACTEACPVKIPLHELLIKHRQIIVEREGKAPVAEKLAMKAFRLGTASPSLYRFGTKLAPSAFAPFAEDGRITKGPGPLKAWTESREFPAPSKERFRDWFQTRQKGGNPS.

4Fe-4S ferredoxin-type domains follow at residues 304–334 (GTEF…GHSY) and 353–382 (YDDY…LHEL). Residues cysteine 313, cysteine 316, cysteine 319, cysteine 323, cysteine 366, cysteine 369, and cysteine 373 each coordinate [4Fe-4S] cluster. The disordered stretch occupies residues 440–476 (KGPGPLKAWTESREFPAPSKERFRDWFQTRQKGGNPS). A compositionally biased stretch (basic and acidic residues) spans 449 to 466 (TESREFPAPSKERFRDWF). The segment covering 467-476 (QTRQKGGNPS) has biased composition (polar residues).

It belongs to the LutB/YkgF family.

Is involved in L-lactate degradation and allows cells to grow with lactate as the sole carbon source. Has probably a role as an electron transporter during oxidation of L-lactate. The protein is Lactate utilization protein B of Geobacillus kaustophilus (strain HTA426).